The sequence spans 178 residues: Ribosome maturation factor RimP (178 aa).

Belongs to the RimP family.

It is found in the cytoplasm. Functionally, required for maturation of 30S ribosomal subunits. The sequence is that of Ribosome maturation factor RimP from Cutibacterium acnes (strain DSM 16379 / KPA171202) (Propionibacterium acnes).